Consider the following 225-residue polypeptide: Cell division protein SepF (225 aa).

The interval 22–116 (EYLDEPEPAR…TRGALAVDTR (95 aa)) is disordered. Basic and acidic residues-rich tracts occupy residues 28–54 (EPAR…RDFA) and 77–86 (RYDGPRHSSR).

Belongs to the SepF family. As to quaternary structure, homodimer. Interacts with FtsZ.

The protein localises to the cytoplasm. Its function is as follows. Cell division protein that is part of the divisome complex and is recruited early to the Z-ring. Probably stimulates Z-ring formation, perhaps through the cross-linking of FtsZ protofilaments. Its function overlaps with FtsA. The chain is Cell division protein SepF from Rhodococcus jostii (strain RHA1).